Consider the following 265-residue polypeptide: 3-methyl-2-oxobutanoate hydroxymethyltransferase (265 aa).

Mg(2+) contacts are provided by D45 and D84. 3-methyl-2-oxobutanoate-binding positions include 45–46 (DS), D84, and K114. A Mg(2+)-binding site is contributed by E116. The active-site Proton acceptor is E183.

Belongs to the PanB family. Homodecamer; pentamer of dimers. Requires Mg(2+) as cofactor.

It localises to the cytoplasm. It carries out the reaction 3-methyl-2-oxobutanoate + (6R)-5,10-methylene-5,6,7,8-tetrahydrofolate + H2O = 2-dehydropantoate + (6S)-5,6,7,8-tetrahydrofolate. Its pathway is cofactor biosynthesis; (R)-pantothenate biosynthesis; (R)-pantoate from 3-methyl-2-oxobutanoate: step 1/2. Functionally, catalyzes the reversible reaction in which hydroxymethyl group from 5,10-methylenetetrahydrofolate is transferred onto alpha-ketoisovalerate to form ketopantoate. The sequence is that of 3-methyl-2-oxobutanoate hydroxymethyltransferase from Salinibacter ruber (strain DSM 13855 / M31).